A 239-amino-acid polypeptide reads, in one-letter code: Fatty acid metabolism regulator protein (239 aa).

Residues Q6–F74 enclose the HTH gntR-type domain. The H-T-H motif DNA-binding region spans E34 to Q53.

In terms of assembly, homodimer.

The protein resides in the cytoplasm. Multifunctional regulator of fatty acid metabolism. This is Fatty acid metabolism regulator protein from Escherichia fergusonii (strain ATCC 35469 / DSM 13698 / CCUG 18766 / IAM 14443 / JCM 21226 / LMG 7866 / NBRC 102419 / NCTC 12128 / CDC 0568-73).